The sequence spans 177 residues: ATP synthase subunit b (177 aa).

A helical transmembrane segment spans residues 19 to 39 (LFPNLPNFIAHVIATIVLVVI).

Belongs to the ATPase B chain family. F-type ATPases have 2 components, F(1) - the catalytic core - and F(0) - the membrane proton channel. F(1) has five subunits: alpha(3), beta(3), gamma(1), delta(1), epsilon(1). F(0) has three main subunits: a(1), b(2) and c(10-14). The alpha and beta chains form an alternating ring which encloses part of the gamma chain. F(1) is attached to F(0) by a central stalk formed by the gamma and epsilon chains, while a peripheral stalk is formed by the delta and b chains.

Its subcellular location is the cell membrane. Functionally, f(1)F(0) ATP synthase produces ATP from ADP in the presence of a proton or sodium gradient. F-type ATPases consist of two structural domains, F(1) containing the extramembraneous catalytic core and F(0) containing the membrane proton channel, linked together by a central stalk and a peripheral stalk. During catalysis, ATP synthesis in the catalytic domain of F(1) is coupled via a rotary mechanism of the central stalk subunits to proton translocation. In terms of biological role, component of the F(0) channel, it forms part of the peripheral stalk, linking F(1) to F(0). The polypeptide is ATP synthase subunit b (Mesoplasma florum (strain ATCC 33453 / NBRC 100688 / NCTC 11704 / L1) (Acholeplasma florum)).